We begin with the raw amino-acid sequence, 250 residues long: Probable dihydroorotate dehydrogenase B (NAD(+)), electron transfer subunit (250 aa).

In terms of domain architecture, FAD-binding FR-type spans 1–89 (MINLKIEENV…RGPYGNGFDV (89 aa)). Residues Cys200, Cys205, Cys208, and Cys216 each coordinate [2Fe-2S] cluster.

The protein belongs to the PyrK family. In terms of assembly, heterotetramer of 2 PyrK and 2 PyrD type B subunits. It depends on [2Fe-2S] cluster as a cofactor. FAD is required as a cofactor.

It functions in the pathway pyrimidine metabolism; UMP biosynthesis via de novo pathway; orotate from (S)-dihydroorotate (NAD(+) route): step 1/1. Functionally, responsible for channeling the electrons from the oxidation of dihydroorotate from the FMN redox center in the PyrD type B subunit to the ultimate electron acceptor NAD(+). The sequence is that of Probable dihydroorotate dehydrogenase B (NAD(+)), electron transfer subunit from Thermoplasma volcanium (strain ATCC 51530 / DSM 4299 / JCM 9571 / NBRC 15438 / GSS1).